Consider the following 254-residue polypeptide: MLGTGDPNLHSSCILSRKKGRQGHHIMKHEQIGSQMTEFSWKDIINALALANMILGLFSIFCSFSRKSYCASWMLLISFLLDIAIGTMTKHLNIPHKLGLELNDFAIFTTFGLASALLLGVDGPLNGFLAIIYVLTTSFRMCFYSTGGATSGYKGLPCPYASCVLASTCLLTKGNTFILCCMASLMILFMIDQSCYPHDEILDSDNWKKIVYIGGVILLFFSPFPLTAFYCLTWSLSYIFSPETLWGRGVRIKP.

Transmembrane regions (helical) follow at residues 44 to 64, 69 to 89, 113 to 135, 171 to 191, and 210 to 230; these read IINA…FCSF, YCAS…GTMT, LASA…IYVL, LTKG…LFMI, and IVYI…TAFY.

It localises to the membrane. The protein is Transmembrane protein 269 of Mus musculus (Mouse).